Here is a 397-residue protein sequence, read N- to C-terminus: Elongation factor Tu 2 (397 aa).

The region spanning 10–206 (KPHVNIGTIG…AIDTWIPEPV (197 aa)) is the tr-type G domain. Positions 19-26 (GHVDHGKT) are G1. 19–26 (GHVDHGKT) is a GTP binding site. Residue Thr-26 participates in Mg(2+) binding. Positions 61–65 (GITIS) are G2. The G3 stretch occupies residues 82-85 (DCPG). GTP-binding positions include 82–86 (DCPGH) and 137–140 (NKCD). The segment at 137–140 (NKCD) is G4. The segment at 175–177 (SAL) is G5.

Belongs to the TRAFAC class translation factor GTPase superfamily. Classic translation factor GTPase family. EF-Tu/EF-1A subfamily. In terms of assembly, monomer.

It is found in the cytoplasm. It carries out the reaction GTP + H2O = GDP + phosphate + H(+). Functionally, GTP hydrolase that promotes the GTP-dependent binding of aminoacyl-tRNA to the A-site of ribosomes during protein biosynthesis. In Alkaliphilus metalliredigens (strain QYMF), this protein is Elongation factor Tu 2.